The sequence spans 213 residues: Peroxisomal protein 2 (213 aa).

A Peroxisomal target signal 1 (PTS1) motif is present at residues 211-213 (ETL).

Belongs to the PXP2 family.

The protein resides in the peroxisome matrix. Its subcellular location is the cytoplasm. It is found in the cytosol. It localises to the nucleus. Functionally, probably involved in peroxisome formation or maintenance as well as in amino acid metabolism. This Schizosaccharomyces pombe (strain 972 / ATCC 24843) (Fission yeast) protein is Peroxisomal protein 2.